Reading from the N-terminus, the 147-residue chain is Small ribosomal subunit protein eS19 (147 aa).

The protein belongs to the eukaryotic ribosomal protein eS19 family. In terms of assembly, component of the small ribosomal subunit.

Its subcellular location is the cytoplasm. The protein localises to the nucleus. Functionally, component of the small ribosomal subunit. The ribosome is a large ribonucleoprotein complex responsible for the synthesis of proteins in the cell. Required for pre-rRNA processing and maturation of 40S ribosomal subunits. This Gillichthys mirabilis (Long-jawed mudsucker) protein is Small ribosomal subunit protein eS19 (rps19).